A 102-amino-acid chain; its full sequence is Citrate lyase acyl carrier protein (102 aa).

S14 is subject to O-(phosphoribosyl dephospho-coenzyme A)serine.

This sequence belongs to the CitD family. Oligomer with a subunit composition of (alpha,beta,gamma)6.

Its subcellular location is the cytoplasm. Functionally, covalent carrier of the coenzyme of citrate lyase. This chain is Citrate lyase acyl carrier protein, found in Serratia proteamaculans (strain 568).